The chain runs to 356 residues: Alanine racemase, catabolic (356 aa).

Residue lysine 35 is the Proton acceptor; specific for D-alanine of the active site. N6-(pyridoxal phosphate)lysine is present on lysine 35. Residue arginine 130 coordinates substrate. The active-site Proton acceptor; specific for L-alanine is the tyrosine 253. Methionine 301 is a substrate binding site.

This sequence belongs to the alanine racemase family. In terms of assembly, monomer. The cofactor is pyridoxal 5'-phosphate.

The catalysed reaction is L-alanine = D-alanine. Inactivated by D- and L-beta-fluoroalanine, D- and L-beta-chloroalanine, and O-acetyl-D-serine. In terms of biological role, isomerizes L-alanine to D-alanine which is then oxidized to pyruvate by DadA. This Salmonella typhimurium (strain LT2 / SGSC1412 / ATCC 700720) protein is Alanine racemase, catabolic (dadX).